Reading from the N-terminus, the 624-residue chain is Chaperone protein HtpG (624 aa).

The a; substrate-binding stretch occupies residues 1–336; it reads MKGQETRGFQ…SNDLPLNVSR (336 aa). The interval 337 to 552 is b; that stretch reads EILQDSTVTR…ADEMSTQMAK (216 aa). Positions 553-624 are c; it reads LFAAAGQSVP…IRRMNQLLVS (72 aa).

The protein belongs to the heat shock protein 90 family. As to quaternary structure, homodimer.

The protein resides in the cytoplasm. In terms of biological role, molecular chaperone. Has ATPase activity. The sequence is that of Chaperone protein HtpG from Salmonella paratyphi B (strain ATCC BAA-1250 / SPB7).